We begin with the raw amino-acid sequence, 51 residues long: Micropeptide inhibiting actin cytoskeleton (51 aa).

The tract at residues 1 to 22 is disordered; it reads MERAGVPGFSPRRSSVEAKMQS.

In terms of assembly, interacts with aquaporin AQP2.

In terms of biological role, reduces filamentous actin fibers by interacting with aquaporin AQP2 which leads to inhibition of the expression of SEPTIN4 and integrin ITGB4. Also inhibits the activation of the EREG/EGFR signaling pathway through interaction with AQP2. The sequence is that of Micropeptide inhibiting actin cytoskeleton from Homo sapiens (Human).